An 827-amino-acid polypeptide reads, in one-letter code: Cadherin-17 (827 aa).

A signal peptide spans 1 to 25 (MVSAQLHFLCLLTLYLTCGYGEEGK). Topologically, residues 26 to 786 (FSGPLKPMTF…RQDGIPTVGM (761 aa)) are extracellular. Cadherin domains follow at residues 29–127 (PLKP…TFLQ), 128–243 (SKYE…APEP), 244–339 (VEIR…PPTC), 340–448 (LSPV…IPIF), 449–565 (ETSN…VPVF), 566–666 (PQRI…PPRL), and 667–776 (AKDY…RPAG). 7 N-linked (GlcNAc...) asparagine glycosylation sites follow: asparagine 148, asparagine 249, asparagine 418, asparagine 545, asparagine 573, asparagine 586, and asparagine 721. The chain crosses the membrane as a helical span at residues 787–807 (AVGILLTTFLVIGIILAVVFI). Residues 808–827 (RMRKDKVENPQSPENKPLRS) are Cytoplasmic-facing.

Highest expression is found in intestine with lower expression in spleen, bone marrow, lung and testis. No expression detected in liver, kidney, heart, brain or skeletal muscle. Expressed in precursor B-cells and myeloid cells.

The protein resides in the cell membrane. Functionally, cadherins are calcium-dependent cell adhesion proteins. They preferentially interact with themselves in a homophilic manner in connecting cells; cadherins may thus contribute to the sorting of heterogeneous cell types. LI-cadherin may have a role in the morphological organization of liver and intestine. The sequence is that of Cadherin-17 (Cdh17) from Mus musculus (Mouse).